The chain runs to 131 residues: Large ribosomal subunit protein bL17 (131 aa).

This sequence belongs to the bacterial ribosomal protein bL17 family. Part of the 50S ribosomal subunit. Contacts protein L32.

In Cupriavidus necator (strain ATCC 17699 / DSM 428 / KCTC 22496 / NCIMB 10442 / H16 / Stanier 337) (Ralstonia eutropha), this protein is Large ribosomal subunit protein bL17.